A 208-amino-acid polypeptide reads, in one-letter code: Sec-independent protein translocase protein TatB (208 aa).

The helical transmembrane segment at 1–21 (MFDIGVGELTLIAVVALVVLG) threads the bilayer. Positions 188–208 (DAGTPAASMPSAPAKIQEKQP) are disordered.

Belongs to the TatB family. In terms of assembly, the Tat system comprises two distinct complexes: a TatABC complex, containing multiple copies of TatA, TatB and TatC subunits, and a separate TatA complex, containing only TatA subunits. Substrates initially bind to the TatABC complex, which probably triggers association of the separate TatA complex to form the active translocon.

Its subcellular location is the cell inner membrane. Part of the twin-arginine translocation (Tat) system that transports large folded proteins containing a characteristic twin-arginine motif in their signal peptide across membranes. Together with TatC, TatB is part of a receptor directly interacting with Tat signal peptides. TatB may form an oligomeric binding site that transiently accommodates folded Tat precursor proteins before their translocation. This chain is Sec-independent protein translocase protein TatB, found in Xanthomonas axonopodis pv. citri (strain 306).